A 406-amino-acid polypeptide reads, in one-letter code: Phosphopentomutase (406 aa).

D10, D305, H310, D346, H347, and H358 together coordinate Mn(2+).

Belongs to the phosphopentomutase family. The cofactor is Mn(2+).

It localises to the cytoplasm. It carries out the reaction 2-deoxy-alpha-D-ribose 1-phosphate = 2-deoxy-D-ribose 5-phosphate. It catalyses the reaction alpha-D-ribose 1-phosphate = D-ribose 5-phosphate. It participates in carbohydrate degradation; 2-deoxy-D-ribose 1-phosphate degradation; D-glyceraldehyde 3-phosphate and acetaldehyde from 2-deoxy-alpha-D-ribose 1-phosphate: step 1/2. Functionally, isomerase that catalyzes the conversion of deoxy-ribose 1-phosphate (dRib-1-P) and ribose 1-phosphate (Rib-1-P) to deoxy-ribose 5-phosphate (dRib-5-P) and ribose 5-phosphate (Rib-5-P), respectively. The sequence is that of Phosphopentomutase from Rhizobium johnstonii (strain DSM 114642 / LMG 32736 / 3841) (Rhizobium leguminosarum bv. viciae).